The sequence spans 371 residues: Cytochrome b (371 aa).

Helical transmembrane passes span 25–45, 69–90, 105–125, and 170–190; these read FGSM…FLAV, WMMQ…YIHI, WMSG…GYVL, and FFAL…LHII. Positions 75 and 89 each coordinate heme b. Residues histidine 174 and histidine 188 each contribute to the heme b site. Position 193 (histidine 193) interacts with a ubiquinone. Helical transmembrane passes span 218 to 238, 280 to 300, 312 to 332, and 339 to 358; these read HKDL…SSFF, LGGA…PFTH, LSQL…WAAT, and FIVI…LSTP.

This sequence belongs to the cytochrome b family. In terms of assembly, the cytochrome bc1 complex contains 3 respiratory subunits (MT-CYB, CYC1 and UQCRFS1), 2 core proteins (UQCRC1 and UQCRC2) and probably 6 low-molecular weight proteins. The cofactor is heme b.

It is found in the mitochondrion inner membrane. In terms of biological role, component of the ubiquinol-cytochrome c reductase complex (complex III or cytochrome b-c1 complex) that is part of the mitochondrial respiratory chain. The b-c1 complex mediates electron transfer from ubiquinol to cytochrome c. Contributes to the generation of a proton gradient across the mitochondrial membrane that is then used for ATP synthesis. The sequence is that of Cytochrome b (MT-CYB) from Aspidites melanocephalus (Black-headed python).